The following is a 306-amino-acid chain: tRNA pseudouridine synthase B (306 aa).

Residue D38 is the Nucleophile of the active site.

The protein belongs to the pseudouridine synthase TruB family. Type 1 subfamily.

It catalyses the reaction uridine(55) in tRNA = pseudouridine(55) in tRNA. Its function is as follows. Responsible for synthesis of pseudouridine from uracil-55 in the psi GC loop of transfer RNAs. In Syntrophotalea carbinolica (strain DSM 2380 / NBRC 103641 / GraBd1) (Pelobacter carbinolicus), this protein is tRNA pseudouridine synthase B.